A 418-amino-acid chain; its full sequence is Tektin-1 (418 aa).

Coiled-coil stretches lie at residues 21 to 84 (KNQY…LEQL), 268 to 308 (LKET…DQEG), and 336 to 383 (RLIK…ENTI). The disordered stretch occupies residues 399–418 (PRDGDDHGEWAGGSHPEAVC).

Belongs to the tektin family. In terms of assembly, microtubule inner protein component of sperm flagellar doublet microtubules. Post-translationally, ubiquitinated, leading to its degradation. Deubiquitinated by USP16, promoting its stability. As to expression, expressed in trachea multiciliated cells.

It is found in the cytoplasm. The protein localises to the cytoskeleton. It localises to the cilium axoneme. The protein resides in the flagellum axoneme. Functionally, microtubule inner protein (MIP) part of the dynein-decorated doublet microtubules (DMTs) in cilia and flagellar axoneme. Forms filamentous polymers in the walls of ciliary and flagellar microtubules. The chain is Tektin-1 (TEKT1) from Bos taurus (Bovine).